The chain runs to 670 residues: DNA ligase (670 aa).

NAD(+)-binding positions include 33–37, 82–83, and E114; these read DVEYD and SL. K116 functions as the N6-AMP-lysine intermediate in the catalytic mechanism. Residues R137, E174, K291, and K315 each contribute to the NAD(+) site. Residues C409, C412, C427, and C433 each coordinate Zn(2+). In terms of domain architecture, BRCT spans 593 to 670; the sequence is DQELPLEGKV…TEEDLIALIS (78 aa).

It belongs to the NAD-dependent DNA ligase family. LigA subfamily. Mg(2+) is required as a cofactor. Mn(2+) serves as cofactor.

The enzyme catalyses NAD(+) + (deoxyribonucleotide)n-3'-hydroxyl + 5'-phospho-(deoxyribonucleotide)m = (deoxyribonucleotide)n+m + AMP + beta-nicotinamide D-nucleotide.. DNA ligase that catalyzes the formation of phosphodiester linkages between 5'-phosphoryl and 3'-hydroxyl groups in double-stranded DNA using NAD as a coenzyme and as the energy source for the reaction. It is essential for DNA replication and repair of damaged DNA. This chain is DNA ligase, found in Vibrio atlanticus (strain LGP32) (Vibrio splendidus (strain Mel32)).